Consider the following 75-residue polypeptide: Penaeidin-3l (75 aa).

An N-terminal signal peptide occupies residues 1–19 (MRLVVCLVFLASFALVCQG). Pyrrolidone carboxylic acid is present on Gln20. Intrachain disulfides connect Cys44/Cys59, Cys48/Cys66, and Cys60/Cys67. The residue at position 74 (Ser74) is a Serine amide.

It belongs to the penaeidin family.

The protein resides in the cytoplasmic granule. Its function is as follows. Antibacterial and antifungal activity. Presents chitin-binding activity. The polypeptide is Penaeidin-3l (Penaeus setiferus (Atlantic white shrimp)).